The sequence spans 155 residues: Transcriptional repressor NrdR (155 aa).

The segment at 3–34 (CPFCGNIDTQVKDSRPAEDHVSIRRRRFCPAC) is a zinc-finger region. Residues 49 to 139 (LVVIKSSGKR…VYKNFQAADD (91 aa)) enclose the ATP-cone domain.

It belongs to the NrdR family. It depends on Zn(2+) as a cofactor.

Its function is as follows. Negatively regulates transcription of bacterial ribonucleotide reductase nrd genes and operons by binding to NrdR-boxes. This chain is Transcriptional repressor NrdR, found in Cereibacter sphaeroides (strain ATCC 17029 / ATH 2.4.9) (Rhodobacter sphaeroides).